The sequence spans 196 residues: Rho-related GTP-binding protein RhoB (196 aa).

Residue 12-19 (GDGACGKT) participates in GTP binding. The O-linked (GlcNAc) tyrosine; by Photorhabdus PAU_02230 glycan is linked to Tyr-34. Residues 34–42 (YVPTVFENY) carry the Effector region motif. (Microbial infection) O-linked (Glc) threonine; by C.difficile toxins TcdA and TcdB glycosylation is present at Thr-37. Asn-41 bears the ADP-ribosylasparagine; by botulinum toxin mark. Residues 59–63 (DTAGQ) and 117–120 (NKKD) each bind GTP. Tyr-154 is modified (phosphotyrosine). 2 S-palmitoyl cysteine lipidation sites follow: Cys-189 and Cys-192. The residue at position 193 (Cys-193) is a Cysteine methyl ester. Residue Cys-193 is the site of S-farnesyl cysteine; in plasma membrane form attachment. Residue Cys-193 is the site of S-geranylgeranyl cysteine; in endosomal form attachment. Positions 194 to 196 (KVL) are cleaved as a propeptide — removed in mature form.

It belongs to the small GTPase superfamily. Rho family. Binds ROCK1 and ROCK2. Also binds PKN1/PRK1. Interacts with ARGGEF3. Interacts with RTKN. Interacts with AKAP13. Interacts with RIPOR1. Prenylation specifies the subcellular location of RHOB. The farnesylated form is localized to the plasma membrane while the geranylgeranylated form is localized to the endosome. In terms of processing, (Microbial infection) Glycosylated at Tyr-34 by Photorhabdus asymbiotica toxin PAU_02230. Mono-O-GlcNAcylation by PAU_02230 inhibits downstream signaling by an impaired interaction with diverse regulator and effector proteins of Rho and leads to actin disassembly. Post-translationally, (Microbial infection) Glucosylated at Thr-37 by C.difficile toxins TcdA and TcdB in the colonic epithelium. Monoglucosylation completely prevents the recognition of the downstream effector, blocking the GTPases in their inactive form, leading to actin cytoskeleton disruption.

Its subcellular location is the late endosome membrane. The protein localises to the cell membrane. The protein resides in the nucleus. It is found in the cleavage furrow. Functionally, mediates apoptosis in neoplastically transformed cells after DNA damage. Not essential for development but affects cell adhesion and growth factor signaling in transformed cells. Plays a negative role in tumorigenesis as deletion causes tumor formation. Involved in intracellular protein trafficking of a number of proteins. Targets PKN1 to endosomes and is involved in trafficking of the EGF receptor from late endosomes to lysosomes. Also required for stability and nuclear trafficking of AKT1/AKT which promotes endothelial cell survival during vascular development. Serves as a microtubule-dependent signal that is required for the myosin contractile ring formation during cell cycle cytokinesis. Required for genotoxic stress-induced cell death in breast cancer cells. The polypeptide is Rho-related GTP-binding protein RhoB (RHOB) (Homo sapiens (Human)).